The chain runs to 497 residues: Serine hydroxymethyltransferase (497 aa).

(6S)-5,6,7,8-tetrahydrofolate contacts are provided by residues Leu176 and 180 to 182; that span reads GHL. The residue at position 289 (Lys289) is an N6-(pyridoxal phosphate)lysine.

Belongs to the SHMT family. As to quaternary structure, homodimer. Pyridoxal 5'-phosphate is required as a cofactor.

It localises to the cytoplasm. It carries out the reaction (6R)-5,10-methylene-5,6,7,8-tetrahydrofolate + glycine + H2O = (6S)-5,6,7,8-tetrahydrofolate + L-serine. The protein operates within one-carbon metabolism; tetrahydrofolate interconversion. Its pathway is amino-acid biosynthesis; glycine biosynthesis; glycine from L-serine: step 1/1. Its function is as follows. Catalyzes the reversible interconversion of serine and glycine with tetrahydrofolate (THF) serving as the one-carbon carrier. This reaction serves as the major source of one-carbon groups required for the biosynthesis of purines, thymidylate, methionine, and other important biomolecules. Also exhibits THF-independent aldolase activity toward beta-hydroxyamino acids, producing glycine and aldehydes, via a retro-aldol mechanism. The protein is Serine hydroxymethyltransferase of Chlamydia trachomatis serovar A (strain ATCC VR-571B / DSM 19440 / HAR-13).